The chain runs to 483 residues: Probable cytosol aminopeptidase (483 aa).

Mn(2+) is bound by residues K244 and D249. K256 is a catalytic residue. Mn(2+) is bound by residues D267, D326, and E328. The active site involves R330.

The protein belongs to the peptidase M17 family. Requires Mn(2+) as cofactor.

Its subcellular location is the cytoplasm. The enzyme catalyses Release of an N-terminal amino acid, Xaa-|-Yaa-, in which Xaa is preferably Leu, but may be other amino acids including Pro although not Arg or Lys, and Yaa may be Pro. Amino acid amides and methyl esters are also readily hydrolyzed, but rates on arylamides are exceedingly low.. It carries out the reaction Release of an N-terminal amino acid, preferentially leucine, but not glutamic or aspartic acids.. Presumably involved in the processing and regular turnover of intracellular proteins. Catalyzes the removal of unsubstituted N-terminal amino acids from various peptides. The sequence is that of Probable cytosol aminopeptidase from Campylobacter jejuni subsp. jejuni serotype O:2 (strain ATCC 700819 / NCTC 11168).